The chain runs to 54 residues: Large ribosomal subunit protein bL33A (54 aa).

The protein belongs to the bacterial ribosomal protein bL33 family.

The sequence is that of Large ribosomal subunit protein bL33A from Mycolicibacterium paratuberculosis (strain ATCC BAA-968 / K-10) (Mycobacterium paratuberculosis).